The following is a 356-amino-acid chain: Protein-glutamate methylesterase/protein-glutamine glutaminase (356 aa).

The Response regulatory domain maps to 4–121 (KVLIVDDSAL…QSGMLEYTDL (118 aa)). The residue at position 55 (D55) is a 4-aspartylphosphate. Residues 156–349 (PLTSSEKLII…RRVLEFFAAH (194 aa)) form the CheB-type methylesterase domain. Active-site residues include S169, H195, and D291.

It belongs to the CheB family. Phosphorylated by CheA. Phosphorylation of the N-terminal regulatory domain activates the methylesterase activity.

It is found in the cytoplasm. The catalysed reaction is [protein]-L-glutamate 5-O-methyl ester + H2O = L-glutamyl-[protein] + methanol + H(+). It catalyses the reaction L-glutaminyl-[protein] + H2O = L-glutamyl-[protein] + NH4(+). In terms of biological role, involved in chemotaxis. Part of a chemotaxis signal transduction system that modulates chemotaxis in response to various stimuli. Catalyzes the demethylation of specific methylglutamate residues introduced into the chemoreceptors (methyl-accepting chemotaxis proteins or MCP) by CheR. Also mediates the irreversible deamidation of specific glutamine residues to glutamic acid. This is Protein-glutamate methylesterase/protein-glutamine glutaminase from Thiobacillus denitrificans (strain ATCC 25259 / T1).